The chain runs to 377 residues: Endoplasmic reticulum-Golgi intermediate compartment protein 2 (377 aa).

Topologically, residues 1–33 (MRRLNRKKTLSLVKELDAFPKVPESYVETSASG) are cytoplasmic. The helical transmembrane segment at 34 to 54 (GTVSLIAFTTMALLTIMEFSV) threads the bilayer. Residues 55–319 (YQDTWMKYEY…PFWQFFVRLC (265 aa)) lie on the Lumenal side of the membrane. Residues 320 to 340 (GIVGGIFSTTGMLHGIGKFIV) form a helical membrane-spanning segment. The Cytoplasmic portion of the chain corresponds to 341–377 (EIICCRFRLGSYKPVNSVPFEDGHTDNHLPLLENNTH).

This sequence belongs to the ERGIC family. May form a heteromeric complex composed of ERGIC1, ERGIC2 and ERGIC3. Interacts with ERGIC3, the interaction is required for the stable expression of both proteins. May interact with EEF1A1.

Its subcellular location is the endoplasmic reticulum-Golgi intermediate compartment membrane. It is found in the golgi apparatus. The protein resides in the cis-Golgi network membrane. The protein localises to the endoplasmic reticulum membrane. It localises to the cytoplasm. Its subcellular location is the nucleus. In terms of biological role, possible role in transport between endoplasmic reticulum and Golgi. The polypeptide is Endoplasmic reticulum-Golgi intermediate compartment protein 2 (ERGIC2) (Macaca fascicularis (Crab-eating macaque)).